The primary structure comprises 233 residues: Putative peroxiredoxin (233 aa).

The Thioredoxin domain maps to 41-200; the sequence is AQIGKEAPEF…TIRIVKAIQF (160 aa). The active-site Cysteine sulfenic acid (-SOH) intermediate is the Cys-87.

It belongs to the peroxiredoxin family. AhpC/Prx1 subfamily. As to quaternary structure, homodimer; disulfide-linked, upon oxidation.

It is found in the cell membrane. It carries out the reaction a hydroperoxide + [thioredoxin]-dithiol = an alcohol + [thioredoxin]-disulfide + H2O. Its function is as follows. Thiol-specific peroxidase that catalyzes the reduction of hydrogen peroxide and organic hydroperoxides to water and alcohols, respectively. Plays a role in cell protection against oxidative stress by detoxifying peroxides and as sensor of hydrogen peroxide-mediated signaling events. This chain is Putative peroxiredoxin, found in Entamoeba histolytica (strain ATCC 30459 / HM-1:IMSS / ABRM).